The following is a 397-amino-acid chain: Lysophospholipid transporter LplT (397 aa).

The Periplasmic segment spans residues 1 to 17 (MSESVHTNTSLWSKGMK). A helical transmembrane segment spans residues 18-38 (AVIVAQFLSAFGDNALLFATL). Over 39–52 (ALLKAQFYPEWSQP) the chain is Cytoplasmic. The helical transmembrane segment at 53–73 (VLQMVFVGAYILFAPFVGQVA) threads the bilayer. Topologically, residues 74 to 90 (DSFAKGRVMMFANGLKL) are periplasmic. The helical transmembrane segment at 91–111 (LGAASICFGFNPFVGYTLVGI) threads the bilayer. At 112 to 144 (GAAAYSPAKYGILGELTTGDKLVKANGLMEAST) the chain is on the cytoplasmic side. The helical transmembrane segment at 145–165 (IAAILLGSVAGGVLADLHVLV) threads the bilayer. Residue Ala166 is a topological domain, periplasmic. The chain crosses the membrane as a helical span at residues 167–187 (LAACALAYAGAVAANIYIPKL). The Cytoplasmic segment spans residues 188 to 226 (AAARPGQSWNVLKMTCSFKSACTSLWQNGETRFSLVGTS). Residues 227 to 247 (LFWGAGVTLRFLLVLWVPVAL) form a helical membrane-spanning segment. Residues 248–256 (GITDNATPT) are Periplasmic-facing. The chain crosses the membrane as a helical span at residues 257–277 (YLNAMVAIGIVLGAGAAAKLV). Residues 278-280 (TLE) lie on the Cytoplasmic side of the membrane. The chain crosses the membrane as a helical span at residues 281-301 (TVSRCMPAGILIGVVVLFFSL). Topologically, residues 302-304 (QHE) are periplasmic. The helical transmembrane segment at 305–325 (LLPAYALLMLIGVLGGFFVVP) threads the bilayer. Residues 326–343 (LNALLQERGKKSVGAGNA) lie on the Cytoplasmic side of the membrane. Residues 344–364 (IAVQNLGENSAMLLMLGIYSL) form a helical membrane-spanning segment. The Periplasmic segment spans residues 365-366 (AV). Residues 367 to 387 (LVGIPVVPIGIGFGTLFALAI) form a helical membrane-spanning segment. The Cytoplasmic portion of the chain corresponds to 388–397 (TALWIWQRRH).

Belongs to the major facilitator superfamily. LplT (TC 2.A.1.42) family.

It is found in the cell inner membrane. Its function is as follows. Catalyzes the facilitated diffusion of 2-acyl-glycero-3-phosphoethanolamine (2-acyl-GPE) into the cell. This chain is Lysophospholipid transporter LplT, found in Escherichia fergusonii (strain ATCC 35469 / DSM 13698 / CCUG 18766 / IAM 14443 / JCM 21226 / LMG 7866 / NBRC 102419 / NCTC 12128 / CDC 0568-73).